A 405-amino-acid chain; its full sequence is Acetylornithine/succinyldiaminopimelate aminotransferase (405 aa).

Pyridoxal 5'-phosphate contacts are provided by residues 107–108 (GA) and Phe-140. Arg-143 is a binding site for N(2)-acetyl-L-ornithine. 225–228 (DEVQ) is a pyridoxal 5'-phosphate binding site. Lys-254 carries the N6-(pyridoxal phosphate)lysine modification. Thr-282 is a N(2)-acetyl-L-ornithine binding site. Thr-283 is a pyridoxal 5'-phosphate binding site.

It belongs to the class-III pyridoxal-phosphate-dependent aminotransferase family. ArgD subfamily. As to quaternary structure, homodimer. Pyridoxal 5'-phosphate serves as cofactor.

Its subcellular location is the cytoplasm. It carries out the reaction N(2)-acetyl-L-ornithine + 2-oxoglutarate = N-acetyl-L-glutamate 5-semialdehyde + L-glutamate. It catalyses the reaction N-succinyl-(2S,6S)-2,6-diaminopimelate + 2-oxoglutarate = (S)-2-succinylamino-6-oxoheptanedioate + L-glutamate. It participates in amino-acid biosynthesis; L-arginine biosynthesis; N(2)-acetyl-L-ornithine from L-glutamate: step 4/4. Its pathway is amino-acid biosynthesis; L-lysine biosynthesis via DAP pathway; LL-2,6-diaminopimelate from (S)-tetrahydrodipicolinate (succinylase route): step 2/3. In terms of biological role, involved in both the arginine and lysine biosynthetic pathways. This chain is Acetylornithine/succinyldiaminopimelate aminotransferase, found in Yersinia pestis.